A 252-amino-acid polypeptide reads, in one-letter code: Probable transcriptional regulatory protein Bcav_1989 (252 aa).

This sequence belongs to the TACO1 family.

The protein localises to the cytoplasm. In Beutenbergia cavernae (strain ATCC BAA-8 / DSM 12333 / CCUG 43141 / JCM 11478 / NBRC 16432 / NCIMB 13614 / HKI 0122), this protein is Probable transcriptional regulatory protein Bcav_1989.